Consider the following 83-residue polypeptide: MKASMFLALAGLVLLFVVCYASESEEKEFPRELISKIFAVDDFKGEVRECKGFGKSCVPGKNECCSGYACNSRDKWCKVLLGK.

The signal sequence occupies residues 1–21; that stretch reads MKASMFLALAGLVLLFVVCYA. The propeptide occupies 22-48; sequence SESEEKEFPRELISKIFAVDDFKGEVR. Intrachain disulfides connect Cys50–Cys65, Cys57–Cys70, and Cys64–Cys77. Leu81 carries the post-translational modification Leucine amide.

It belongs to the neurotoxin 10 (Hwtx-1) family. 14 (Hntx-1) subfamily. As to quaternary structure, monomer. In terms of tissue distribution, expressed by the venom gland.

It is found in the secreted. In terms of biological role, weakly blocks the rat SCN2A/SCN1B (Nav1.2/beta-1) sodium channel (IC(50)=68 uM) and the insect sodium channel para/tipE (IC(50)=4.3 uM), without altering the activation or inactivation kinetics (depressant toxin). This is Mu-theraphotoxin-Hhn2b 3 from Cyriopagopus hainanus (Chinese bird spider).